The primary structure comprises 122 residues: MIRPQSYLNVADNTGARKVMCIRVLGGIQGQTANIGDVIIAVVKDALPNTGVKKSDIVRAVVVRTRKGIRRENGMFIRFEDNAAVVINKEGNPRGTRIFGPVARELRDRNFTKIVSLAPEVL.

Belongs to the universal ribosomal protein uL14 family. Part of the 50S ribosomal subunit.

The protein localises to the plastid. It is found in the chloroplast. Binds to 23S rRNA. The sequence is that of Large ribosomal subunit protein uL14c from Stigeoclonium helveticum (Green alga).